The chain runs to 399 residues: Tyrosine--tRNA ligase (399 aa).

Positions P42–H51 match the 'HIGH' region motif. Positions K226–S230 match the 'KMSKS' region motif. K229 serves as a coordination point for ATP. The 62-residue stretch at L337–L398 folds into the S4 RNA-binding domain.

The protein belongs to the class-I aminoacyl-tRNA synthetase family. TyrS type 2 subfamily. Homodimer.

The protein localises to the cytoplasm. It catalyses the reaction tRNA(Tyr) + L-tyrosine + ATP = L-tyrosyl-tRNA(Tyr) + AMP + diphosphate + H(+). In terms of biological role, catalyzes the attachment of tyrosine to tRNA(Tyr) in a two-step reaction: tyrosine is first activated by ATP to form Tyr-AMP and then transferred to the acceptor end of tRNA(Tyr). The polypeptide is Tyrosine--tRNA ligase (Aromatoleum aromaticum (strain DSM 19018 / LMG 30748 / EbN1) (Azoarcus sp. (strain EbN1))).